The chain runs to 304 residues: Ornithine carbamoyltransferase (304 aa).

Residues 51 to 54, Gln78, Arg102, and 129 to 132 each bind carbamoyl phosphate; these read STRT and HPVQ. L-ornithine-binding positions include Asn157, Asp221, and 225–226; that span reads SM. Carbamoyl phosphate contacts are provided by residues 261–262 and Arg289; that span reads CL.

This sequence belongs to the aspartate/ornithine carbamoyltransferase superfamily. OTCase family.

The protein resides in the cytoplasm. It catalyses the reaction carbamoyl phosphate + L-ornithine = L-citrulline + phosphate + H(+). Its pathway is amino-acid degradation; L-arginine degradation via ADI pathway; carbamoyl phosphate from L-arginine: step 2/2. Functionally, reversibly catalyzes the transfer of the carbamoyl group from carbamoyl phosphate (CP) to the N(epsilon) atom of ornithine (ORN) to produce L-citrulline. This is Ornithine carbamoyltransferase from Campylobacter curvus (strain 525.92).